A 197-amino-acid chain; its full sequence is Holliday junction branch migration complex subunit RuvA (197 aa).

The interval 1 to 64 is domain I; the sequence is MIGRLSGKLI…EDAHLLYGFA (64 aa). Positions 65–143 are domain II; the sequence is SKEERQTFRQ…TGGNLTVPGG (79 aa). The segment at 143-147 is flexible linker; it reads GLPFA. A domain III region spans residues 148-197; the sequence is ATPDEKSDIVNALLALGYNEKEAAAATKSLPADVTVSEGVRLALKSLMKV.

The protein belongs to the RuvA family. Homotetramer. Forms an RuvA(8)-RuvB(12)-Holliday junction (HJ) complex. HJ DNA is sandwiched between 2 RuvA tetramers; dsDNA enters through RuvA and exits via RuvB. An RuvB hexamer assembles on each DNA strand where it exits the tetramer. Each RuvB hexamer is contacted by two RuvA subunits (via domain III) on 2 adjacent RuvB subunits; this complex drives branch migration. In the full resolvosome a probable DNA-RuvA(4)-RuvB(12)-RuvC(2) complex forms which resolves the HJ.

It localises to the cytoplasm. The RuvA-RuvB-RuvC complex processes Holliday junction (HJ) DNA during genetic recombination and DNA repair, while the RuvA-RuvB complex plays an important role in the rescue of blocked DNA replication forks via replication fork reversal (RFR). RuvA specifically binds to HJ cruciform DNA, conferring on it an open structure. The RuvB hexamer acts as an ATP-dependent pump, pulling dsDNA into and through the RuvAB complex. HJ branch migration allows RuvC to scan DNA until it finds its consensus sequence, where it cleaves and resolves the cruciform DNA. This chain is Holliday junction branch migration complex subunit RuvA, found in Chromobacterium violaceum (strain ATCC 12472 / DSM 30191 / JCM 1249 / CCUG 213 / NBRC 12614 / NCIMB 9131 / NCTC 9757 / MK).